We begin with the raw amino-acid sequence, 491 residues long: Glutamyl-tRNA(Gln) amidotransferase subunit A (491 aa).

The active-site Charge relay system is Ser158. Ser182 serves as the catalytic Acyl-ester intermediate.

Belongs to the amidase family. GatA subfamily. Heterotrimer of A, B and C subunits.

It catalyses the reaction L-glutamyl-tRNA(Gln) + L-glutamine + ATP + H2O = L-glutaminyl-tRNA(Gln) + L-glutamate + ADP + phosphate + H(+). In terms of biological role, allows the formation of correctly charged Gln-tRNA(Gln) through the transamidation of misacylated Glu-tRNA(Gln) in organisms which lack glutaminyl-tRNA synthetase. The reaction takes place in the presence of glutamine and ATP through an activated gamma-phospho-Glu-tRNA(Gln). The chain is Glutamyl-tRNA(Gln) amidotransferase subunit A from Bradyrhizobium diazoefficiens (strain JCM 10833 / BCRC 13528 / IAM 13628 / NBRC 14792 / USDA 110).